The primary structure comprises 503 residues: UDP-N-acetylmuramoylalanine--D-glutamate ligase (503 aa).

129–135 (GTNGKTT) lines the ATP pocket. A disordered region spans residues 284–305 (DSEAEGEGKPRRRKADATAQEA).

Belongs to the MurCDEF family.

It localises to the cytoplasm. The enzyme catalyses UDP-N-acetyl-alpha-D-muramoyl-L-alanine + D-glutamate + ATP = UDP-N-acetyl-alpha-D-muramoyl-L-alanyl-D-glutamate + ADP + phosphate + H(+). It functions in the pathway cell wall biogenesis; peptidoglycan biosynthesis. Cell wall formation. Catalyzes the addition of glutamate to the nucleotide precursor UDP-N-acetylmuramoyl-L-alanine (UMA). The polypeptide is UDP-N-acetylmuramoylalanine--D-glutamate ligase (Cupriavidus pinatubonensis (strain JMP 134 / LMG 1197) (Cupriavidus necator (strain JMP 134))).